A 372-amino-acid chain; its full sequence is NAD(P)H-quinone oxidoreductase subunit 1 (372 aa).

The next 8 membrane-spanning stretches (helical) occupy residues 27–47 (LLWIPLPMLLVLVSAVIGVLV), 97–117 (VLFTVGPILVLVPVILSWLIV), 128–148 (VGIGIFLWIALSSIQPIGLLM), 166–186 (AAQSISYEIPLALAVLAIVMM), 204–224 (FLSWNIWRQPVGFIIFWICAL), 266–286 (VLSALLVSVLYLGGWGFPISI), 308–328 (SLGIVMTILKAYLLVFLAILL), and 347–367 (FLLPISLVNLLVTASLKLAFP).

The protein belongs to the complex I subunit 1 family. In terms of assembly, NDH-1 is composed of at least 11 different subunits.

The protein localises to the cellular thylakoid membrane. The catalysed reaction is a plastoquinone + NADH + (n+1) H(+)(in) = a plastoquinol + NAD(+) + n H(+)(out). It catalyses the reaction a plastoquinone + NADPH + (n+1) H(+)(in) = a plastoquinol + NADP(+) + n H(+)(out). NDH-1 shuttles electrons from an unknown electron donor, via FMN and iron-sulfur (Fe-S) centers, to quinones in the respiratory and/or the photosynthetic chain. The immediate electron acceptor for the enzyme in this species is believed to be plastoquinone. Couples the redox reaction to proton translocation, and thus conserves the redox energy in a proton gradient. In Prochlorococcus marinus (strain NATL2A), this protein is NAD(P)H-quinone oxidoreductase subunit 1.